The primary structure comprises 1866 residues: Protein strawberry notch homolog (1866 aa).

Residues 19-28 (QQSSPTPSTS) are compositionally biased toward low complexity. 5 disordered regions span residues 19 to 63 (QQSS…HSSS), 132 to 151 (TAPTVNQSEPSTPTVTIVPK), 156 to 253 (LFET…GLPI), 561 to 581 (GMASPRLQTTPQPLTKSQKAK), and 1112 to 1308 (GLSG…ARGS). Composition is skewed to polar residues over residues 37–63 (QSFSNNTHTPSVSQFFDETSNDSHSSS) and 134–146 (PTVNQSEPSTPTV). Residues 161 to 176 (TADSPTPSGDTSTTAS) are compositionally biased toward low complexity. Polar residues-rich tracts occupy residues 191 to 203 (DRQNPMFVQTARS) and 210 to 228 (TPSTSATVSPHITSSLTQR). A compositionally biased stretch (low complexity) spans 229-239 (SHTSSPASSAS). Residues 566–577 (RLQTTPQPLTKS) show a composition bias toward polar residues. The span at 1112–1126 (GLSGIGRSSMSSSTG) shows a compositional bias: low complexity. The span at 1142 to 1152 (DGSDDEVENDM) shows a compositional bias: acidic residues. A compositionally biased stretch (basic and acidic residues) spans 1164–1177 (ESAREEAEGARTLE). Positions 1194–1213 (SSSDDSDEEVVKDEDEDEEA) are enriched in acidic residues. Basic and acidic residues-rich tracts occupy residues 1262–1281 (RDEEEAERLREKVRKREERR) and 1290–1304 (RRAEREKQRRNEELQ).

This sequence belongs to the SBNO family. In terms of tissue distribution, expressed in the somatic gonad, neurons, hypodermal cells, seam cells, the excretory system, and intestinal cells (at protein level).

It is found in the nucleus. Functionally, transcriptional activator that functions upstream of the let-60/Ras and let-23/EGFR signaling pathways to positively regulate lin-3 expression and thereby promote vulval induction. Plays a role in excretory duct development. Plays a role in male tail development. The chain is Protein strawberry notch homolog from Caenorhabditis elegans.